We begin with the raw amino-acid sequence, 186 residues long: uncharacterized protein (186 aa).

Disordered regions lie at residues 17 to 47 (LSGE…EETF), 77 to 105 (EDKL…AAEA), and 121 to 164 (QQAA…PVAG). The segment covering 90 to 105 (PLAARPPSQAAAAAEA) has biased composition (low complexity). A compositionally biased stretch (acidic residues) spans 136–149 (PEPDPEPADEAAEE).

This is an uncharacterized protein from Homo sapiens (Human).